Here is a 131-residue protein sequence, read N- to C-terminus: MRKTALLNSDLSSVISKMGHTDMIAIGDCGLPIPAESERIDLALIKGIPTFMQTLKTTLLELQIEEVILAKETEAVSPDLYEEIKEVIGDVKITFITHEELKTTLKSCKAVVRTGEQTPYANIILKSGVVF.

Histidine 20 (proton donor) is an active-site residue. Substrate contacts are provided by residues aspartate 28, histidine 98, and 120–122 (YAN).

It belongs to the RbsD / FucU family. RbsD subfamily. In terms of assembly, homodecamer.

It is found in the cytoplasm. The catalysed reaction is beta-D-ribopyranose = beta-D-ribofuranose. The protein operates within carbohydrate metabolism; D-ribose degradation; D-ribose 5-phosphate from beta-D-ribopyranose: step 1/2. Functionally, catalyzes the interconversion of beta-pyran and beta-furan forms of D-ribose. In Clostridium botulinum (strain Eklund 17B / Type B), this protein is D-ribose pyranase.